We begin with the raw amino-acid sequence, 554 residues long: Glucose-6-phosphate isomerase (554 aa).

Glu-358 (proton donor) is an active-site residue. Active-site residues include His-389 and Lys-515. The segment covering 527 to 540 (SDGSPQRQSDSSTD) has biased composition (polar residues). Positions 527–554 (SDGSPQRQSDSSTDALVRRYRTQRGRTG) are disordered. A compositionally biased stretch (basic residues) spans 544–554 (RRYRTQRGRTG).

Belongs to the GPI family.

It is found in the cytoplasm. It carries out the reaction alpha-D-glucose 6-phosphate = beta-D-fructose 6-phosphate. Its pathway is carbohydrate biosynthesis; gluconeogenesis. The protein operates within carbohydrate degradation; glycolysis; D-glyceraldehyde 3-phosphate and glycerone phosphate from D-glucose: step 2/4. Functionally, catalyzes the reversible isomerization of glucose-6-phosphate to fructose-6-phosphate. This Mycobacterium ulcerans (strain Agy99) protein is Glucose-6-phosphate isomerase.